Consider the following 141-residue polypeptide: Hemoglobin subunit alpha (141 aa).

In terms of domain architecture, Globin spans 1 to 141 (VLSANDKTNV…VSTVLTSKYR (141 aa)). Serine 3 is modified (phosphoserine). Residue lysine 7 is modified to N6-succinyllysine. Threonine 8 bears the Phosphothreonine mark. Lysine 11 carries the N6-succinyllysine modification. Lysine 16 carries the N6-acetyllysine; alternate modification. N6-succinyllysine; alternate is present on lysine 16. Tyrosine 24 carries the post-translational modification Phosphotyrosine. At serine 35 the chain carries Phosphoserine. Position 40 is an N6-succinyllysine (lysine 40). Serine 49 carries the post-translational modification Phosphoserine. Glutamine 58 contributes to the O2 binding site. Histidine 87 contacts heme b. Threonine 108 carries the post-translational modification Phosphothreonine. Residues serine 124 and serine 131 each carry the phosphoserine modification. A phosphothreonine mark is found at threonine 134 and threonine 137. Serine 138 carries the phosphoserine modification.

It belongs to the globin family. Heterotetramer of two alpha chains and two beta chains. As to expression, red blood cells.

In terms of biological role, involved in oxygen transport from the lung to the various peripheral tissues. Hemopressin acts as an antagonist peptide of the cannabinoid receptor CNR1. Hemopressin-binding efficiently blocks cannabinoid receptor CNR1 and subsequent signaling. This Didelphis virginiana (North American opossum) protein is Hemoglobin subunit alpha (HBA).